The chain runs to 798 residues: Putative antiporter subunit mnhA2 (798 aa).

21 helical membrane-spanning segments follow: residues 1-21 (MSLVYLLSTLILIMVILLFTL), 33-53 (IALLAPIVASVYFLYQLPSVM), 78-98 (GLSLFFSLLISLIGLAVVYYA), 109-129 (LPRFYVYLLLFMFSMLGIVTA), 133-153 (ILMYVFWELTSVSSFLLIVYW), 167-187 (FMITVFGGLALLAGFIMIYIV), 209-229 (FIPIIILLLLGAFTKSAQFPF), 241-261 (TPVSAYLHSATMVKAGIFLLF), 272-292 (FYIYSVTFVGLITMIFGAVNA), 300-320 (AILAYSTISQLGMIVSMVGLG), 337-357 (MILFAALFHLMNHALYKGALF), 381-401 (VFPITHIVMLLSALSMAGIPF), 431-451 (IITVIGVIASIFTLVYGVYMI), 472-492 (PFLFTLPSAIMMILLPVIFFI), 526-546 (GFNLPLILSLIVIVVGFIMAL), 593-613 (ITITLLIFSMVVIYGMIQAGF), 625-645 (GPIEVITLIVVFVLGIALTFI), 649-669 (LTMVVLNGIIGYCVTIFFILM), 674-694 (LALTQLVVETITTILFIVSFS), 710-730 (AVKIIVSLLMAVIVVTLVFIA), and 766-786 (IDTLFEGMVLIIAGLGIYTLL).

The protein belongs to the CPA3 antiporters (TC 2.A.63) subunit A family. May form a heterooligomeric complex that consists of seven subunits: mnhA2, mnhB2, mnhC2, mnhD2, mnhE2, mnhF2 and mnhG2.

The protein resides in the cell membrane. The sequence is that of Putative antiporter subunit mnhA2 (mnhA2) from Staphylococcus saprophyticus subsp. saprophyticus (strain ATCC 15305 / DSM 20229 / NCIMB 8711 / NCTC 7292 / S-41).